Consider the following 887-residue polypeptide: Chaperone protein ClpB 2 (887 aa).

Positions 6–147 (PTKFTDKAWE…AATVKAIRGA (142 aa)) constitute a Clp R domain. Repeat regions lie at residues 9–73 (FTDK…ARQQ) and 84–147 (CGRS…IRGA). The interval 160-342 (AALEKYGRDL…RRFQQVYIGQ (183 aa)) is NBD1. Residue 207 to 214 (GEPGVGKT) coordinates ATP. The linker stretch occupies residues 343–559 (PSVEDTISIL…IAEIVAKWTG (217 aa)). Positions 393–535 (IDLVDEAAAK…TEAQLLELQA (143 aa)) form a coiled coil. Residues 569 to 780 (ERQKLLQLEQ…RIDDVILFHG (212 aa)) form an NBD2 region. An ATP-binding site is contributed by 619 to 626 (GPTGVGKT). Residues 781-887 (LGRTELAQIA…TGDRDTVSAS (107 aa)) form a C-terminal region.

The protein belongs to the ClpA/ClpB family. As to quaternary structure, homohexamer. The oligomerization is ATP-dependent.

The protein resides in the cytoplasm. Part of a stress-induced multi-chaperone system, it is involved in the recovery of the cell from heat-induced damage, in cooperation with DnaK, DnaJ and GrpE. Acts before DnaK, in the processing of protein aggregates. Protein binding stimulates the ATPase activity; ATP hydrolysis unfolds the denatured protein aggregates, which probably helps expose new hydrophobic binding sites on the surface of ClpB-bound aggregates, contributing to the solubilization and refolding of denatured protein aggregates by DnaK. The chain is Chaperone protein ClpB 2 (clpB2) from Thermosynechococcus vestitus (strain NIES-2133 / IAM M-273 / BP-1).